The chain runs to 341 residues: L-threonine 3-dehydrogenase (341 aa).

Zn(2+) is bound at residue Cys-38. Active-site charge relay system residues include Thr-40 and His-43. The Zn(2+) site is built by His-63, Glu-64, Cys-93, Cys-96, Cys-99, and Cys-107. Residues Ile-175, Asp-195, Arg-200, 262 to 264, and 286 to 287 each bind NAD(+); these read LGI and IY.

This sequence belongs to the zinc-containing alcohol dehydrogenase family. Homotetramer. The cofactor is Zn(2+).

It is found in the cytoplasm. The catalysed reaction is L-threonine + NAD(+) = (2S)-2-amino-3-oxobutanoate + NADH + H(+). It functions in the pathway amino-acid degradation; L-threonine degradation via oxydo-reductase pathway; glycine from L-threonine: step 1/2. In terms of biological role, catalyzes the NAD(+)-dependent oxidation of L-threonine to 2-amino-3-ketobutyrate. The chain is L-threonine 3-dehydrogenase from Enterobacter sp. (strain 638).